The primary structure comprises 132 residues: Ribosome-binding factor A (132 aa).

This sequence belongs to the RbfA family. As to quaternary structure, monomer. Binds 30S ribosomal subunits, but not 50S ribosomal subunits or 70S ribosomes.

It is found in the cytoplasm. Its function is as follows. One of several proteins that assist in the late maturation steps of the functional core of the 30S ribosomal subunit. Associates with free 30S ribosomal subunits (but not with 30S subunits that are part of 70S ribosomes or polysomes). Required for efficient processing of 16S rRNA. May interact with the 5'-terminal helix region of 16S rRNA. The protein is Ribosome-binding factor A of Rhizorhabdus wittichii (strain DSM 6014 / CCUG 31198 / JCM 15750 / NBRC 105917 / EY 4224 / RW1) (Sphingomonas wittichii).